The primary structure comprises 275 residues: Subtilisin (275 aa).

Glutamine 2 contributes to the Ca(2+) binding site. Residues proline 5 to alanine 274 form the Peptidase S8 domain. The active-site Charge relay system is the aspartate 32. Aspartate 41 contributes to the Ca(2+) binding site. Catalysis depends on histidine 64, which acts as the Charge relay system. 7 residues coordinate Ca(2+): leucine 75, asparagine 77, isoleucine 79, valine 81, alanine 169, tyrosine 171, and threonine 174. Serine 221 (charge relay system) is an active-site residue.

It belongs to the peptidase S8 family. Requires Ca(2+) as cofactor.

It is found in the secreted. The catalysed reaction is Hydrolysis of proteins with broad specificity for peptide bonds, and a preference for a large uncharged residue in P1. Hydrolyzes peptide amides.. Functionally, subtilisin is an extracellular alkaline serine protease, it catalyzes the hydrolysis of proteins and peptide amides. This chain is Subtilisin (apr), found in Bacillus pumilus (Bacillus mesentericus).